The following is a 427-amino-acid chain: Acyl-lipid 8-desaturase (427 aa).

Residues 1-24 form a disordered region; the sequence is MGRGGDSSGQAHPAAELAVPSDRA. In terms of domain architecture, Cytochrome b5 heme-binding spans 36–84; the sequence is IVLYGKRVDVTKFQRTHPGGSKVFRIFQDRDATEQFESYHSKRAIKMME. H52 and H75 together coordinate heme. A Histidine box-1 motif is present at residues 178-182; sequence HSVFK. Residues 189–209 form a helical membrane-spanning segment; sequence VGWNNAAGYFLGFVQGYAVEW. The Histidine box-2 signature appears at 213 to 218; the sequence is RHNTHH. 2 helical membrane-spanning segments follow: residues 261 to 281 and 286 to 306; these read VPVM…YVAM and MLPQ…VFAG. The short motif at 373-377 is the Histidine box-3 element; it reads QTEHH.

This sequence belongs to the fatty acid desaturase type 1 family. Fe(2+) is required as a cofactor.

It is found in the membrane. Functionally, fatty acid desaturase that introduces a cis double bond at the 8-position in 20-carbon polyunsaturated fatty acids incorporated in a glycerolipid that contain a Delta(8) double bond to yield (20:4(8,11,14,17)). This chain is Acyl-lipid 8-desaturase, found in Rebecca salina (Marine microalga).